The sequence spans 520 residues: Nuclear GTP-binding protein NUG1 (520 aa).

Composition is skewed to basic residues over residues 1–13 (MRVRKRQSRRTST) and 21–34 (KKASAHRKKEKKMA). The segment at 1-53 (MRVRKRQSRRTSTKLKEGIKKKASAHRKKEKKMAKKDVTWRSRSKKDPGIPSN) is disordered. Positions 35-48 (KKDVTWRSRSKKDP) are enriched in basic and acidic residues. Residues 165–343 (YDKIFKSVID…ILDSPGICFP (179 aa)) enclose the CP-type G domain. Residues 213 to 216 (NKVD), 287 to 294 (GYPNVGKS), and 336 to 339 (DSPG) contribute to the GTP site. Serine 337 carries the phosphoserine modification.

This sequence belongs to the TRAFAC class YlqF/YawG GTPase family.

It localises to the nucleus. Its function is as follows. GTPase required for 60S ribosomal subunit export to the cytoplasm. The sequence is that of Nuclear GTP-binding protein NUG1 (NUG1) from Saccharomyces cerevisiae (strain ATCC 204508 / S288c) (Baker's yeast).